Here is a 207-residue protein sequence, read N- to C-terminus: MPKINILNQQGDLVSEKVLATTVFDIKPNQQVLYDVVNAQRAAMRQGTHATKTRALVAGGGKKPWRQKGTGRARHGSIRSPLWRGGGVTFGPSPRNYSVKVNQKVRILALKSALSLQVQNNQLVVLDNINLATHKTKDFQQMLQKLNITSKSLIVVTQMTEQLALASRNLSYITLETASHASVYQILNCKQLVLTADAVNYFEEVLK.

Residues 58-78 (AGGGKKPWRQKGTGRARHGSI) are disordered. Residues 63-77 (KPWRQKGTGRARHGS) are compositionally biased toward basic residues.

The protein belongs to the universal ribosomal protein uL4 family. Part of the 50S ribosomal subunit.

Functionally, one of the primary rRNA binding proteins, this protein initially binds near the 5'-end of the 23S rRNA. It is important during the early stages of 50S assembly. It makes multiple contacts with different domains of the 23S rRNA in the assembled 50S subunit and ribosome. Forms part of the polypeptide exit tunnel. The sequence is that of Large ribosomal subunit protein uL4 from Aster yellows witches'-broom phytoplasma (strain AYWB).